Consider the following 736-residue polypeptide: uncharacterized protein (736 aa).

2 ABC transporter domains span residues 183 to 459 (IKID…KQME) and 518 to 734 (LQMS…TMTI). Residues 215–222 (GRNGIGKS) and 551–558 (GPNGAGKS) each bind ATP.

Belongs to the ABC transporter superfamily.

It localises to the cytoplasm. This is an uncharacterized protein from Schizosaccharomyces pombe (strain 972 / ATCC 24843) (Fission yeast).